A 198-amino-acid polypeptide reads, in one-letter code: Na(+)-translocating NADH-quinone reductase subunit E (198 aa).

6 consecutive transmembrane segments (helical) span residues 11–31, 39–59, 77–97, 110–130, 140–160, and 176–196; these read SIFI…FLAV, FGLG…NNLV, FLNF…LEMI, GIFL…SFMV, VVYG…LAGI, and LGIT…FSGV.

Belongs to the NqrDE/RnfAE family. In terms of assembly, composed of six subunits; NqrA, NqrB, NqrC, NqrD, NqrE and NqrF.

The protein resides in the cell inner membrane. The enzyme catalyses a ubiquinone + n Na(+)(in) + NADH + H(+) = a ubiquinol + n Na(+)(out) + NAD(+). In terms of biological role, NQR complex catalyzes the reduction of ubiquinone-1 to ubiquinol by two successive reactions, coupled with the transport of Na(+) ions from the cytoplasm to the periplasm. NqrA to NqrE are probably involved in the second step, the conversion of ubisemiquinone to ubiquinol. This is Na(+)-translocating NADH-quinone reductase subunit E from Vibrio vulnificus (strain CMCP6).